Consider the following 347-residue polypeptide: uncharacterized protein (347 aa).

5 disordered regions span residues 1–40, 72–92, 133–158, 173–209, and 306–347; these read MAQE…SNSM, SCED…IQGS, SDST…QLTL, ENQK…QVSH, and EDPR…PPDF. Polar residues predominate over residues 15–25; sequence PGQNITETTTD. A compositionally biased stretch (basic and acidic residues) spans 143-154; the sequence is GDNKDKHPKEKT. Positions 179–194 are enriched in acidic residues; that stretch reads KDDDSVFPESAQEEDS. Residues 195–209 show a composition bias toward polar residues; sequence QLPSSSLPGMAQVSH. Positions 306-318 are enriched in basic and acidic residues; that stretch reads EDPREANERPREL. Positions 319-330 are enriched in basic residues; sequence ARKKRFSYRSKR.

This is an uncharacterized protein from Bos taurus (Bovine).